Reading from the N-terminus, the 369-residue chain is 4-hydroxy-3-methylbut-2-en-1-yl diphosphate synthase (flavodoxin) (369 aa).

C270, C273, C305, and E312 together coordinate [4Fe-4S] cluster.

Belongs to the IspG family. The cofactor is [4Fe-4S] cluster.

The catalysed reaction is (2E)-4-hydroxy-3-methylbut-2-enyl diphosphate + oxidized [flavodoxin] + H2O + 2 H(+) = 2-C-methyl-D-erythritol 2,4-cyclic diphosphate + reduced [flavodoxin]. The protein operates within isoprenoid biosynthesis; isopentenyl diphosphate biosynthesis via DXP pathway; isopentenyl diphosphate from 1-deoxy-D-xylulose 5-phosphate: step 5/6. Its function is as follows. Converts 2C-methyl-D-erythritol 2,4-cyclodiphosphate (ME-2,4cPP) into 1-hydroxy-2-methyl-2-(E)-butenyl 4-diphosphate. This is 4-hydroxy-3-methylbut-2-en-1-yl diphosphate synthase (flavodoxin) from Pseudomonas syringae pv. tomato (strain ATCC BAA-871 / DC3000).